The chain runs to 259 residues: Ribonuclease HII (259 aa).

In terms of domain architecture, RNase H type-2 spans 72-259 (SYIAGIDEVG…PIKDMIKNKL (188 aa)). Positions 78, 79, and 170 each coordinate a divalent metal cation.

The protein belongs to the RNase HII family. The cofactor is Mn(2+). Mg(2+) serves as cofactor.

Its subcellular location is the cytoplasm. The enzyme catalyses Endonucleolytic cleavage to 5'-phosphomonoester.. Functionally, endonuclease that specifically degrades the RNA of RNA-DNA hybrids. This chain is Ribonuclease HII, found in Bacillus cytotoxicus (strain DSM 22905 / CIP 110041 / 391-98 / NVH 391-98).